The primary structure comprises 201 residues: Small ribosomal subunit protein uS4 (201 aa).

The tract at residues 19–41 (LVGGSSAYEKRPYPPGQHGRARI) is disordered. In terms of domain architecture, S4 RNA-binding spans 91 to 157 (SRLDNVVYRA…LPFEVARETA (67 aa)).

It belongs to the universal ribosomal protein uS4 family. Part of the 30S ribosomal subunit. Contacts protein S5. The interaction surface between S4 and S5 is involved in control of translational fidelity.

In terms of biological role, one of the primary rRNA binding proteins, it binds directly to 16S rRNA where it nucleates assembly of the body of the 30S subunit. Functionally, with S5 and S12 plays an important role in translational accuracy. In Mycobacteroides abscessus (strain ATCC 19977 / DSM 44196 / CCUG 20993 / CIP 104536 / JCM 13569 / NCTC 13031 / TMC 1543 / L948) (Mycobacterium abscessus), this protein is Small ribosomal subunit protein uS4.